The primary structure comprises 500 residues: Perfringolysin O (500 aa).

The N-terminal stretch at 1-28 (MIRFKKTKLIASIAMALCLFSQPVISFS) is a signal peptide. 4 beta stranded membrane passes run 189–202 (KSQI…NAKV), 209–218 (VDFNAVANNE), 287–296 (SKDVQAAFKA), and 304–316 (KNSQ…YENS). Positions 458–468 (ECTGLAWEWWR) match the Conserved undecapeptide motif. Positions 490–491 (TL) match the Cholesterol binding motif.

This sequence belongs to the cholesterol-dependent cytolysin family. As to quaternary structure, homooligomeric pore complex of 35 to 50 subunits; when inserted in the host membrane.

The protein resides in the secreted. Its subcellular location is the host cell membrane. Functionally, a cholesterol-dependent toxin that causes cytolysis by forming pores in cholesterol containing host membranes. After binding to target membranes, the protein assembles into a pre-pore complex. A conformation change leads to insertion in the host membrane and formation of an oligomeric pore complex. Cholesterol is required for binding to host cell membranes, membrane insertion and pore formation; cholesterol binding is mediated by a Thr-Leu pair in the C-terminus. Can be reversibly inactivated by oxidation. This is Perfringolysin O (pfo) from Clostridium perfringens (strain ATCC 13124 / DSM 756 / JCM 1290 / NCIMB 6125 / NCTC 8237 / Type A).